Reading from the N-terminus, the 781-residue chain is Homeobox protein SIX4 (781 aa).

A compositionally biased stretch (polar residues) spans 1-10; sequence MSSSSPTGQI. Disordered stretches follow at residues 1–55 and 270–321; these read MSSS…PLEP and WFKN…GITN. At Ser2 the chain carries N-acetylserine. The segment at residues 223–282 is a DNA-binding region (homeobox); sequence GEETVYCFKEKSRNALKELYKQNRYPSPAEKRHLAKITGLSLTQVSNWFKNRRQRDRNPS. Basic and acidic residues-rich tracts occupy residues 278–290 and 299–308; these read DRNPSETQSKSES and ESSKGHEDLS. A Phosphoserine modification is found at Ser640.

This sequence belongs to the SIX/Sine oculis homeobox family. In terms of assembly, interacts with EYA3; acts cooperatively with EYA3 to transactivate target genes through interaction and nuclear translocation of EYA3 protein.

It localises to the nucleus. Its subcellular location is the cytoplasm. Its function is as follows. Transcriptional regulator which can act as both a transcriptional repressor and activator by binding a DNA sequence on these target genes and is involved in processes like cell differentiation, cell migration and cell survival. Transactivates gene expression by binding a 5'-[CAT]A[CT][CT][CTG]GA[GAT]-3' motif present in the Trex site and a 5'-TCA[AG][AG]TTNC-3' motif present in the MEF3 site of the muscle-specific genes enhancer. Acts cooperatively with EYA proteins to transactivate their target genes through interaction and nuclear translocation of EYA protein. Acts synergistically with SIX1 to regulate target genes involved in formation of various organs, including muscle, kidney, gonad, ganglia, olfactory epithelium and cranial skeleton. Plays a role in several important steps of muscle development. Controls the genesis of hypaxial myogenic progenitors in the dermomyotome by transactivating PAX3 and the delamination and migration of the hypaxial precursors from the ventral lip to the limb buds through the transactivation of PAX3, MET and LBX1. Controls myoblast determination by transactivating MYF5, MYOD1 and MYF6. Controls somitic differentiation in myocyte through MYOG transactivation. Plays a role in synaptogenesis and sarcomere organization by participating in myofiber specialization during embryogenesis by activating fast muscle program in the primary myotome resulting in an up-regulation of fast muscle genes, including ATP2A1, MYL1 and TNNT3. Simultaneously, is also able to activate inhibitors of slow muscle genes, such as SOX6, HRASLS, and HDAC4, thereby restricting the activation of the slow muscle genes. During muscle regeneration, negatively regulates differentiation of muscle satellite cells through down-regulation of MYOG expression. During kidney development regulates the early stages of metanephros development and ureteric bud formation through regulation of GDNF, SALL1, PAX8 and PAX2 expression. Plays a role in gonad development by regulating both testis determination and size determination. In gonadal sex determination, transactivates ZFPM2 by binding a MEF3 consensus sequence, resulting in SRY up-regulation. In gonadal size determination, transactivates NR5A1 by binding a MEF3 consensus sequence resulting in gonadal precursor cell formation regulation. During olfactory development mediates the specification and patterning of olfactory placode through fibroblast growth factor and BMP4 signaling pathways and also regulates epithelial cell proliferation during placode formation. Promotes survival of sensory neurons during early trigeminal gangliogenesis. In the developing dorsal root ganglia, up-regulates SLC12A2 transcription. Regulates early thymus/parathyroid organogenesis through regulation of GCM2 and FOXN1 expression. Forms gustatory papillae during development of the tongue. Also plays a role during embryonic cranial skeleton morphogenesis. This chain is Homeobox protein SIX4 (SIX4), found in Homo sapiens (Human).